A 575-amino-acid polypeptide reads, in one-letter code: Golgi-associated kinase 1A (575 aa).

The signal sequence occupies residues 1-29 (MASWLRRKLRGKRRPVIAFCLLMILSAMA). Positions 30–119 (VTRFPPQRPS…GDLRHPGRVR (90 aa)) are cleaved as a propeptide — removed in mature form. Residues 53–58 (TGAPAT) are O-glycosylated at one site. The segment covering 143 to 153 (VGDPGTKDLGH) has biased composition (basic and acidic residues). A disordered region spans residues 143-162 (VGDPGTKDLGHPQHGSPIQE). Residues 437–575 (RYCCGFEPEP…NLTLFRDEDP (139 aa)) constitute a propeptide, removed in mature form. Asparagine 566 is a glycosylation site (N-linked (GlcNAc...) asparagine).

It belongs to the GASK family. Post-translationally, O-glycosylated with core 1 or possibly core 8 glycans. Proteolytically cleaved. Cleaved at Arg-120 and Arg-437 leading to a processed mature product of 35 kDa. The cleavage takes place in the Golgi apparatus. In terms of tissue distribution, expressed in skin, lung and colon (at protein level).

The protein localises to the secreted. It is found in the endoplasmic reticulum. The protein resides in the golgi apparatus. Its subcellular location is the membrane. It localises to the caveola. The sequence is that of Golgi-associated kinase 1A from Homo sapiens (Human).